The primary structure comprises 463 residues: Steroidogenic factor 1 (463 aa).

A DNA-binding region (nuclear receptor) is located at residues 10–85; sequence DELCPVCGDK…VGMRLEAVRA (76 aa). Residues 13 to 33 form an NR C4-type zinc finger; it reads CPVCGDKVSGYHYGLLTCESC. N6-acetyllysine occurs at positions 34, 38, and 72. The NR C4-type zinc finger occupies 49-73; that stretch reads CTESQNCKIDKTQRKRCPYCRFQKC. Lys119 participates in a covalent cross-link: Glycyl lysine isopeptide (Lys-Gly) (interchain with G-Cter in SUMO). Positions 119 to 160 are disordered; it reads KLETGPSMGPPPQTDYPLAPALHPGAKGLAPAPPAGPPGDYE. Residues 135–148 are compositionally biased toward low complexity; sequence PLAPALHPGAKGLA. Lys193 participates in a covalent cross-link: Glycyl lysine isopeptide (Lys-Gly) (interchain with G-Cter in SUMO). Positions 197 to 216 are disordered; that stretch reads PEPYASPHEPAPPYGYPEPY. Ser202 carries the post-translational modification Phosphoserine; by CDK7. A compositionally biased stretch (pro residues) spans 205 to 216; sequence EPAPPYGYPEPY. Residues 224–461 enclose the NR LBD domain; the sequence is GVPELILKLL…NLLIEMLHAK (238 aa). Gly343, Tyr438, and Lys442 together coordinate a 1,2-diacyl-sn-glycero-3-phosphocholine.

The protein belongs to the nuclear hormone receptor family. NR5 subfamily. In terms of assembly, binds DNA as a monomer. Part of a complex consisting of SFPQ, NONO and NR5A1. Interacts with NR0B2, NCOA2 and PPARGC1A. Interacts with DGKQ and CDK7. Binds to and activated by HIPK3. In terms of processing, acetylation stimulates the transcriptional activity. Sumoylation reduces CDK7-mediated phosphorylation on Ser-202. Post-translationally, phosphorylated on Ser-202 by CDK7. This phosphorylation promotes transcriptional activity. Expressed in the pre-granulosa and Sertoli cells of the ovary and testis, respectively. In the testis it is also present in the interstitial cells. In the adult ovary it is expressed in the interstitial gland, and in the granulosa cells and theca interna of small to medium-sized antral follicles, but is not expressed in large antral follicles.

It is found in the nucleus. Transcriptional activator. Seems to be essential for sexual differentiation and formation of the primary steroidogenic tissues. Binds to the Ad4 site found in the promoter region of steroidogenic P450 genes such as CYP11A, CYP11B and CYP21B. Also regulates the AMH/Muellerian inhibiting substance gene as well as the AHCH and STAR genes. 5'-YCAAGGYC-3' and 5'-RRAGGTCA-3' are the consensus sequences for the recognition by NR5A1. The SFPQ-NONO-NR5A1 complex binds to the CYP17 promoter and regulates basal and cAMP-dependent transcriptional activity. Binds phosphatidylcholine and phospholipids with a phosphatidylinositol (PI) headgroup, in particular PI(3,4)P2 and PI(3,4,5)P3. Activated by the phosphorylation of NR5A1 by HIPK3 leading to increased steroidogenic gene expression upon cAMP signaling pathway stimulation. This Notamacropus eugenii (Tammar wallaby) protein is Steroidogenic factor 1 (NR5A1).